Reading from the N-terminus, the 136-residue chain is uncharacterized protein (136 aa).

Belongs to the MG439/MG440 family.

This is an uncharacterized protein from Mycoplasma pneumoniae (strain ATCC 29342 / M129 / Subtype 1) (Mycoplasmoides pneumoniae).